We begin with the raw amino-acid sequence, 234 residues long: Phosphoribosylaminoimidazole-succinocarboxamide synthase (234 aa).

It belongs to the SAICAR synthetase family.

The catalysed reaction is 5-amino-1-(5-phospho-D-ribosyl)imidazole-4-carboxylate + L-aspartate + ATP = (2S)-2-[5-amino-1-(5-phospho-beta-D-ribosyl)imidazole-4-carboxamido]succinate + ADP + phosphate + 2 H(+). It functions in the pathway purine metabolism; IMP biosynthesis via de novo pathway; 5-amino-1-(5-phospho-D-ribosyl)imidazole-4-carboxamide from 5-amino-1-(5-phospho-D-ribosyl)imidazole-4-carboxylate: step 1/2. This Staphylococcus aureus (strain COL) protein is Phosphoribosylaminoimidazole-succinocarboxamide synthase.